We begin with the raw amino-acid sequence, 167 residues long: UPF0114 protein in repA1-repA2 intergenic region (167 aa).

Transmembrane regions (helical) follow at residues 15–35 (LMFPVNIGLSFGFILLTLKFF), 53–73 (LVLIVLSLIDIALVGGLLVMV), and 136–156 (IILCVIIHLTFVLSAFGMAYI).

Belongs to the UPF0114 family.

The protein localises to the cell membrane. The chain is UPF0114 protein in repA1-repA2 intergenic region from Buchnera aphidicola subsp. Pterocomma populeum.